The chain runs to 412 residues: CapZ-interacting protein (412 aa).

Disordered stretches follow at residues 1–84 (MEER…KSSP) and 99–412 (ALLP…DTRM). The span at 7–20 (ETNSNVDSSAQPSV) shows a compositional bias: polar residues. Phosphoserine is present on residues S68, S82, S83, S105, S108, S116, S120, and S123. T124 is subject to Phosphothreonine. S126, S127, S135, and S143 each carry phosphoserine. Over residues 159–176 (VRTRGSIKRRPPSRRFRR) the composition is skewed to basic residues. Phosphoserine is present on residues S177, S179, and S216. Phosphothreonine is present on residues T243 and T256. Basic and acidic residues predominate over residues 248 to 258 (EKPEELVRTPE). Residue S297 is modified to Phosphoserine. Composition is skewed to basic and acidic residues over residues 298-312 (PREE…DTGK) and 319-330 (SEERVADEDRLG). A phosphoserine mark is found at S333 and S401.

Interacts with CAPZA2 and CAPZB. Post-translationally, dephosphorylation results in its dissociation from CAPZA2.

Its function is as follows. Stress-induced phosphorylation of CAPZIP may regulate the ability of F-actin-capping protein to remodel actin filament assembly. This is CapZ-interacting protein (Rcsd1) from Mus musculus (Mouse).